A 72-amino-acid chain; its full sequence is MALPKRRLSHARQGNRRAHVALSAPAVMECPQCNSPKLSHQACSVCGTYNGRTVVDVDAIAKKKADKSKGQQ.

This sequence belongs to the bacterial ribosomal protein bL32 family.

The chain is Large ribosomal subunit protein bL32 from Dehalococcoides mccartyi (strain ATCC BAA-2266 / KCTC 15142 / 195) (Dehalococcoides ethenogenes (strain 195)).